The following is an 852-amino-acid chain: Ubiquitin carboxyl-terminal hydrolase 4 (852 aa).

A Rhodanese domain is found at 172–296 (ASGTVLLVDV…WSNAHPDFCV (125 aa)). Residues 369 to 393 (RSSSSSSNINERPGSVPPQLSNGST) are disordered. Residues 488-849 (VGLVNCGNSC…NAYVLFYHRI (362 aa)) form the USP domain. The Nucleophile role is filled by Cys-497. His-806 functions as the Proton acceptor in the catalytic mechanism.

This sequence belongs to the peptidase C19 family.

The protein localises to the cytoplasm. It is found in the late endosome membrane. It catalyses the reaction Thiol-dependent hydrolysis of ester, thioester, amide, peptide and isopeptide bonds formed by the C-terminal Gly of ubiquitin (a 76-residue protein attached to proteins as an intracellular targeting signal).. Its activity is regulated as follows. RFU1 is an inhibitor of deubiquitination activity. Functionally, ubiquitin thioesterase that acts at the late endosome/prevacuolar compartment to recover ubiquitin from ubiquitinated membrane proteins en route to the vacuole. Also removes ubiquitin from soluble proteins targeted to proteasomes. Is essential to maintain a normal level of free ubiquitin. Required for promoting coordination of DNA replication and avoids DNA overreplication. The protein is Ubiquitin carboxyl-terminal hydrolase 4 (DOA4) of Eremothecium gossypii (strain ATCC 10895 / CBS 109.51 / FGSC 9923 / NRRL Y-1056) (Yeast).